Consider the following 411-residue polypeptide: Dual-specificity RNA methyltransferase RlmN (411 aa).

The active-site Proton acceptor is the E124. In terms of domain architecture, Radical SAM core spans 130–379 (EEGRGTLCIS…IRTPRGRDIL (250 aa)). The cysteines at positions 137 and 382 are disulfide-linked. The [4Fe-4S] cluster site is built by C144, C148, and C151. Residues 208–209 (GE), S240, 262–264 (SLH), and N339 contribute to the S-adenosyl-L-methionine site. Residue C382 is the S-methylcysteine intermediate of the active site.

Belongs to the radical SAM superfamily. RlmN family. Requires [4Fe-4S] cluster as cofactor.

The protein localises to the cytoplasm. It carries out the reaction adenosine(2503) in 23S rRNA + 2 reduced [2Fe-2S]-[ferredoxin] + 2 S-adenosyl-L-methionine = 2-methyladenosine(2503) in 23S rRNA + 5'-deoxyadenosine + L-methionine + 2 oxidized [2Fe-2S]-[ferredoxin] + S-adenosyl-L-homocysteine. The catalysed reaction is adenosine(37) in tRNA + 2 reduced [2Fe-2S]-[ferredoxin] + 2 S-adenosyl-L-methionine = 2-methyladenosine(37) in tRNA + 5'-deoxyadenosine + L-methionine + 2 oxidized [2Fe-2S]-[ferredoxin] + S-adenosyl-L-homocysteine. Its function is as follows. Specifically methylates position 2 of adenine 2503 in 23S rRNA and position 2 of adenine 37 in tRNAs. m2A2503 modification seems to play a crucial role in the proofreading step occurring at the peptidyl transferase center and thus would serve to optimize ribosomal fidelity. The chain is Dual-specificity RNA methyltransferase RlmN from Rhizobium meliloti (strain 1021) (Ensifer meliloti).